A 535-amino-acid chain; its full sequence is Bifunctional purine biosynthesis protein PurH (535 aa).

Residues Thr-6–Val-151 enclose the MGS-like domain.

Belongs to the PurH family.

It catalyses the reaction (6R)-10-formyltetrahydrofolate + 5-amino-1-(5-phospho-beta-D-ribosyl)imidazole-4-carboxamide = 5-formamido-1-(5-phospho-D-ribosyl)imidazole-4-carboxamide + (6S)-5,6,7,8-tetrahydrofolate. The enzyme catalyses IMP + H2O = 5-formamido-1-(5-phospho-D-ribosyl)imidazole-4-carboxamide. The protein operates within purine metabolism; IMP biosynthesis via de novo pathway; 5-formamido-1-(5-phospho-D-ribosyl)imidazole-4-carboxamide from 5-amino-1-(5-phospho-D-ribosyl)imidazole-4-carboxamide (10-formyl THF route): step 1/1. Its pathway is purine metabolism; IMP biosynthesis via de novo pathway; IMP from 5-formamido-1-(5-phospho-D-ribosyl)imidazole-4-carboxamide: step 1/1. The polypeptide is Bifunctional purine biosynthesis protein PurH (Azotobacter vinelandii (strain DJ / ATCC BAA-1303)).